The following is a 290-amino-acid chain: L-cysteine S-thiosulfotransferase subunit SoxA (290 aa).

The signal sequence occupies residues 1-26 (MPRFTKTKGTLAATALGLALAGAAFA). Positions 78 and 81 each coordinate Zn(2+). The region spanning 78–171 (DDFDNPAMVF…DMLSLISLQS (94 aa)) is the Cytochrome c domain. Residues C106, C109, H110, and C143 each coordinate heme c. Position 190 (H190) interacts with Zn(2+). Heme c contacts are provided by C206, C209, and H210. R247 is a binding site for substrate. A heme c-binding site is contributed by C251. The active-site Cysteine persulfide intermediate is C251. A Zn(2+)-binding site is contributed by D266.

This sequence belongs to the SoxA family. As to quaternary structure, heterodimer of SoxA and SoxX. The cofactor is heme c. Zn(2+) serves as cofactor. Cysteine persulfide at Cys-251.

The protein localises to the periplasm. The catalysed reaction is L-cysteinyl-[SoxY protein] + thiosulfate + 2 Fe(III)-[cytochrome c] = S-sulfosulfanyl-L-cysteinyl-[SoxY protein] + 2 Fe(II)-[cytochrome c] + 2 H(+). It carries out the reaction S-sulfanyl-L-cysteinyl-[SoxY protein] + thiosulfate + 2 Fe(III)-[cytochrome c] = S-(2-sulfodisulfanyl)-L-cysteinyl-[SoxY protein] + 2 Fe(II)-[cytochrome c] + 2 H(+). Functionally, C-type diheme cytochrome, which is part of the SoxAX cytochrome complex involved in sulfur oxidation. The SoxAX complex catalyzes the formation of a heterodisulfide bond between the conserved cysteine residue on a sulfur carrier SoxYZ complex subunit SoxY and thiosulfate or other inorganic sulfur substrates. This leads to the liberation of two electrons, which may be transferred from the SoxAX complex to another cytochrome c that then channels them into the respiratory electron transport chain. Some electrons may be used for reductive CO(2) fixation. In Paracoccus pantotrophus (Thiosphaera pantotropha), this protein is L-cysteine S-thiosulfotransferase subunit SoxA.